The following is a 655-amino-acid chain: Large subunit GTPase 1 homolog (655 aa).

Residues 1–31 (MGRRRAPGGGSLGRVLIRHQTQRSRSHRHTD) are disordered. Basic residues predominate over residues 16–28 (LIRHQTQRSRSHR). Phosphoserine is present on residues S93 and S97. The CP-type G domain occupies 164–441 (WRQLWRVIER…LCDCPGLVMP (278 aa)). 212 to 215 (NKAD) is a binding site for GTP. S252 bears the Phosphoserine mark. Residues 253-359 (KDEVNSVAGE…ENSQMSNKSH (107 aa)) form a disordered region. A compositionally biased stretch (acidic residues) spans 288 to 327 (EESESDDDDSEYEDCQEDEEEDWQTCSEEDSNPEEGQEEG). Residues 328–339 (GCDRDQKEHGPE) show a composition bias toward basic and acidic residues. A compositionally biased stretch (polar residues) spans 344-359 (QSRASPENSQMSNKSH). Residues 390 to 397 (GYPNVGKS) and 434 to 437 (DCPG) each bind GTP. Residues 625–655 (SAENVPGKPWKKHGNRNKKEKSRRLYRHLDV) are disordered. The segment covering 633–655 (PWKKHGNRNKKEKSRRLYRHLDV) has biased composition (basic residues).

The protein belongs to the TRAFAC class YlqF/YawG GTPase family. LSG1 subfamily.

Its subcellular location is the cytoplasm. It is found in the endoplasmic reticulum. The protein localises to the nucleus. The protein resides in the cajal body. The enzyme catalyses GTP + H2O = GDP + phosphate + H(+). Its function is as follows. Functions as a GTPase. May act by mediating the release of NMD3 from the 60S ribosomal subunit after export into the cytoplasm during the 60S ribosomal subunit maturation. The sequence is that of Large subunit GTPase 1 homolog from Rattus norvegicus (Rat).